A 1358-amino-acid chain; its full sequence is DNA-directed RNA polymerase subunit beta (1358 aa).

Belongs to the RNA polymerase beta chain family. The RNAP catalytic core consists of 2 alpha, 1 beta, 1 beta' and 1 omega subunit. When a sigma factor is associated with the core the holoenzyme is formed, which can initiate transcription.

The catalysed reaction is RNA(n) + a ribonucleoside 5'-triphosphate = RNA(n+1) + diphosphate. DNA-dependent RNA polymerase catalyzes the transcription of DNA into RNA using the four ribonucleoside triphosphates as substrates. The chain is DNA-directed RNA polymerase subunit beta from Francisella tularensis subsp. holarctica (strain FTNF002-00 / FTA).